The following is a 122-amino-acid chain: Large ribosomal subunit protein uL14 (122 aa).

This sequence belongs to the universal ribosomal protein uL14 family. In terms of assembly, part of the 50S ribosomal subunit. Forms a cluster with proteins L3 and L19. In the 70S ribosome, L14 and L19 interact and together make contacts with the 16S rRNA in bridges B5 and B8.

In terms of biological role, binds to 23S rRNA. Forms part of two intersubunit bridges in the 70S ribosome. The protein is Large ribosomal subunit protein uL14 of Chromobacterium violaceum (strain ATCC 12472 / DSM 30191 / JCM 1249 / CCUG 213 / NBRC 12614 / NCIMB 9131 / NCTC 9757 / MK).